The following is a 406-amino-acid chain: Endo-xylogalacturonan hydrolase A (406 aa).

The N-terminal stretch at 1 to 18 (MALYRNLYLLASLGLSSA) is a signal peptide. 5 PbH1 repeats span residues 183–213 (ATNVVFSNLKMDANSKSDNPPKNTDGFDIGE), 214–257 (STYV…SVGS), 266–289 (VKNIYVTGATMINSTKAAGIKTYP), 299–320 (VSNVTFNDFTVDNSDYAFQIQS), and 333–375 (PGNA…SISG). The active-site Proton donor is the Asp-228. His-251 is a catalytic residue. Asn-278 and Asn-301 each carry an N-linked (GlcNAc...) asparagine glycan.

This sequence belongs to the glycosyl hydrolase 28 family.

The protein resides in the secreted. Pectinolytic enzyme involved in the degradation of xylogalacturonan (xga), a galacturonan backbone heavily substituted with xylose, and which is one important component of the hairy regions of pectin. Activity requires a galacturonic acid backbone substituted with xylose. This chain is Endo-xylogalacturonan hydrolase A (xghA), found in Aspergillus tubingensis.